The chain runs to 98 residues: NADH-ubiquinone oxidoreductase chain 4L (98 aa).

A run of 3 helical transmembrane segments spans residues 1 to 21 (MIPT…GMLT), 27 to 47 (VASL…ATLI), and 61 to 81 (IILL…LISI).

Belongs to the complex I subunit 4L family. As to quaternary structure, core subunit of respiratory chain NADH dehydrogenase (Complex I) which is composed of 45 different subunits.

Its subcellular location is the mitochondrion inner membrane. It carries out the reaction a ubiquinone + NADH + 5 H(+)(in) = a ubiquinol + NAD(+) + 4 H(+)(out). Functionally, core subunit of the mitochondrial membrane respiratory chain NADH dehydrogenase (Complex I) which catalyzes electron transfer from NADH through the respiratory chain, using ubiquinone as an electron acceptor. Part of the enzyme membrane arm which is embedded in the lipid bilayer and involved in proton translocation. This chain is NADH-ubiquinone oxidoreductase chain 4L (MT-ND4L), found in Macaca hecki (Heck's macaque).